We begin with the raw amino-acid sequence, 532 residues long: Monolignol oxidoreductase AtBBE-like 15 (532 aa).

The signal sequence occupies residues 1–27 (MAFAISKRNATLFLVTLLLISVPLSSS). A disulfide bond links Cys36 and Cys100. Asn57 carries N-linked (GlcNAc...) asparagine glycosylation. One can recognise an FAD-binding PCMH-type domain in the interval 76–254 (TPSNPKPVFI…LAWKIKLVPV (179 aa)). Positions 115-179 (HDYEGLSFVA…QTHGFPAGLC (65 aa)) form a cross-link, 6-(S-cysteinyl)-8alpha-(pros-histidyl)-FAD (His-Cys). Asn306 and Asn431 each carry an N-linked (GlcNAc...) asparagine glycan.

This sequence belongs to the oxygen-dependent FAD-linked oxidoreductase family. The cofactor is FAD. The FAD cofactor is bound via a bicovalent 6-S-cysteinyl, 8alpha-N1-histidyl FAD linkage. As to expression, expressed in sepals and stamen.

The protein localises to the secreted. The protein resides in the cell wall. The catalysed reaction is (E)-4-coumaroyl alcohol + A = (E)-4-coumaraldehyde + AH2. It catalyses the reaction (E)-coniferol + A = (E)-coniferaldehyde + AH2. It carries out the reaction (E)-sinapyl alcohol + A = (E)-sinapaldehyde + AH2. The enzyme catalyses 4-O-(beta-D-glucosyl)-(E)-coniferol + A = 4-O-(beta-D-glucosyl)-4-(E)-coniferyl aldehyde + AH2. Its function is as follows. Required for endosperm development and polar nuclei fusion. Mediates oxidation of p-hydroxylated derivatives of cinnamyl alcohol (i.e. the monolignols p-coumaryl-, coniferyl-, and sinapyl alcohol) to their corresponding aldehydes. Can also use the beta-O-glycosylated form of coniferyl alcohol (coniferin) as substrate, but is much less efficient towards cinnamyl alcohol. The electron acceptor required for these reactions is not known, but does not seem to be dioxygen. This Arabidopsis thaliana (Mouse-ear cress) protein is Monolignol oxidoreductase AtBBE-like 15.